Reading from the N-terminus, the 627-residue chain is 1-deoxy-D-xylulose-5-phosphate synthase (627 aa).

Thiamine diphosphate contacts are provided by residues H80 and G121–S123. Position 152 (D152) interacts with Mg(2+). Thiamine diphosphate is bound by residues G153 to A154, N181, Y288, and E370. N181 serves as a coordination point for Mg(2+).

This sequence belongs to the transketolase family. DXPS subfamily. Homodimer. Mg(2+) serves as cofactor. Requires thiamine diphosphate as cofactor.

The enzyme catalyses D-glyceraldehyde 3-phosphate + pyruvate + H(+) = 1-deoxy-D-xylulose 5-phosphate + CO2. The protein operates within metabolic intermediate biosynthesis; 1-deoxy-D-xylulose 5-phosphate biosynthesis; 1-deoxy-D-xylulose 5-phosphate from D-glyceraldehyde 3-phosphate and pyruvate: step 1/1. Its function is as follows. Catalyzes the acyloin condensation reaction between C atoms 2 and 3 of pyruvate and glyceraldehyde 3-phosphate to yield 1-deoxy-D-xylulose-5-phosphate (DXP). The sequence is that of 1-deoxy-D-xylulose-5-phosphate synthase from Aliivibrio fischeri (strain MJ11) (Vibrio fischeri).